A 57-amino-acid polypeptide reads, in one-letter code: Large ribosomal subunit protein bL32 (57 aa).

The segment covering 1–22 has biased composition (basic residues); that stretch reads MAVPKKKTSKAKRDQRRAHWRR. Residues 1–35 form a disordered region; the sequence is MAVPKKKTSKAKRDQRRAHWRRQASSQAQKALSLG.

It belongs to the bacterial ribosomal protein bL32 family.

The polypeptide is Large ribosomal subunit protein bL32 (rpmF) (Synechocystis sp. (strain ATCC 27184 / PCC 6803 / Kazusa)).